Here is a 136-residue protein sequence, read N- to C-terminus: Large-conductance mechanosensitive channel (136 aa).

4 consecutive transmembrane segments (helical) span residues alanine 9–phenylalanine 29, isoleucine 32–valine 52, phenylalanine 54–alanine 74, and isoleucine 79–isoleucine 99.

Belongs to the MscL family. In terms of assembly, homopentamer.

The protein resides in the cell inner membrane. In terms of biological role, channel that opens in response to stretch forces in the membrane lipid bilayer. May participate in the regulation of osmotic pressure changes within the cell. The protein is Large-conductance mechanosensitive channel of Shewanella oneidensis (strain ATCC 700550 / JCM 31522 / CIP 106686 / LMG 19005 / NCIMB 14063 / MR-1).